A 361-amino-acid polypeptide reads, in one-letter code: GTP 3',8-cyclase (361 aa).

The disordered stretch occupies residues 1-30 (MTVTALGLPTVARSTGDGSAGASPAPADGP). The segment covering 16 to 30 (GDGSAGASPAPADGP) has biased composition (low complexity). The region spanning 34–252 (TYGRAATDLR…LQQHFELTPD (219 aa)) is the Radical SAM core domain. Arginine 43 contacts GTP. Positions 50 and 54 each coordinate [4Fe-4S] cluster. S-adenosyl-L-methionine is bound at residue tyrosine 56. Cysteine 57 is a [4Fe-4S] cluster binding site. Arginine 94 is a binding site for GTP. Glycine 98 serves as a coordination point for S-adenosyl-L-methionine. GTP is bound at residue threonine 125. Serine 149 contributes to the S-adenosyl-L-methionine binding site. Lysine 186 lines the GTP pocket. An S-adenosyl-L-methionine-binding site is contributed by methionine 220. Residues cysteine 288 and cysteine 291 each coordinate [4Fe-4S] cluster. 293–295 (RTR) contacts GTP. Cysteine 305 serves as a coordination point for [4Fe-4S] cluster.

Belongs to the radical SAM superfamily. MoaA family. In terms of assembly, monomer and homodimer. Requires [4Fe-4S] cluster as cofactor.

It carries out the reaction GTP + AH2 + S-adenosyl-L-methionine = (8S)-3',8-cyclo-7,8-dihydroguanosine 5'-triphosphate + 5'-deoxyadenosine + L-methionine + A + H(+). It functions in the pathway cofactor biosynthesis; molybdopterin biosynthesis. In terms of biological role, catalyzes the cyclization of GTP to (8S)-3',8-cyclo-7,8-dihydroguanosine 5'-triphosphate. The polypeptide is GTP 3',8-cyclase (Mycolicibacterium smegmatis (strain ATCC 700084 / mc(2)155) (Mycobacterium smegmatis)).